A 477-amino-acid chain; its full sequence is MNFETTVGLEVHIEMQTNSKAYSPSPVQYGAEQNTNTNVIDWGYPGVLPEINKGALEFGMRAALALHCDITQDVGFDRKNYFYPDNPKAYQITQARTPIGTNGWLEIELEDGTKKKIGIREMHVEEDAGKNTHNPDGYSYVDLNRQGTPLIEIVAEPDISSADEAYAYLTKLRQVIQFTGISDVKMEEGSMRADVNVSIAPIGSDKLGVRTEMKNLNSFEHVRKGIQYEVKRQERLLMSGGEVEQETRRFDEPSGETILMRSKEEANDYRYFPEPDLPPIHISDDWIEEVRASIPEMPDKRRERYTQDWGIPAYDAGVLTQTKEMSDFYDATVAAGAGPKLAANWLMGEVNAYLNSKQVELSDTALTPEHLATMIKLIEDETISSKIAKKVFKEIITNDTEPKAWVESKGMVQLSDPAKLQPIIDEVLDNNEQSIEDFKNGKDRAIGFLVGQIMKKTRGMANPKMVNKLLMASLKER.

The protein belongs to the GatB/GatE family. GatB subfamily. In terms of assembly, heterotrimer of A, B and C subunits.

It catalyses the reaction L-glutamyl-tRNA(Gln) + L-glutamine + ATP + H2O = L-glutaminyl-tRNA(Gln) + L-glutamate + ADP + phosphate + H(+). The enzyme catalyses L-aspartyl-tRNA(Asn) + L-glutamine + ATP + H2O = L-asparaginyl-tRNA(Asn) + L-glutamate + ADP + phosphate + 2 H(+). Its function is as follows. Allows the formation of correctly charged Asn-tRNA(Asn) or Gln-tRNA(Gln) through the transamidation of misacylated Asp-tRNA(Asn) or Glu-tRNA(Gln) in organisms which lack either or both of asparaginyl-tRNA or glutaminyl-tRNA synthetases. The reaction takes place in the presence of glutamine and ATP through an activated phospho-Asp-tRNA(Asn) or phospho-Glu-tRNA(Gln). The polypeptide is Aspartyl/glutamyl-tRNA(Asn/Gln) amidotransferase subunit B (Ligilactobacillus salivarius (strain UCC118) (Lactobacillus salivarius)).